A 1538-amino-acid chain; its full sequence is Myosin-9 (1538 aa).

Residues S16–V65 form the Myosin N-terminal SH3-like domain. The 671-residue stretch at G70 to A740 folds into the Myosin motor domain. Residues G164 to T171 and N217 to K225 contribute to the ATP site. 4 actin-binding regions span residues L503–F537, T539–V562, F597–L621, and L621–N643. IQ domains follow at residues L743–S772, L766–A795, R791–V820, L814–A843, Q839–L868, and L862–E891. The stretch at T892 to A1064 forms a coiled coil. Residues S1017–G1032 are compositionally biased toward basic and acidic residues. 2 disordered regions span residues S1017–R1041 and S1098–Q1121. In terms of domain architecture, Dilute spans D1168–E1481.

Belongs to the TRAFAC class myosin-kinesin ATPase superfamily. Myosin family. Plant myosin class XI subfamily. Homodimer.

In terms of biological role, myosin heavy chain that is required for the cell cycle-regulated transport of various organelles and proteins for their segregation. Functions by binding with its tail domain to receptor proteins on organelles and exerting force with its N-terminal motor domain against actin filaments, thereby transporting its cargo along polarized actin cables. Involved in trafficking of Golgi stacks and mitochondria. In Arabidopsis thaliana (Mouse-ear cress), this protein is Myosin-9 (XI-C).